A 293-amino-acid polypeptide reads, in one-letter code: Formamidopyrimidine-DNA glycosylase (293 aa).

Pro2 functions as the Schiff-base intermediate with DNA in the catalytic mechanism. Residue Glu3 is the Proton donor of the active site. The Proton donor; for beta-elimination activity role is filled by Lys60. The DNA site is built by His110, Arg129, and Arg174. The segment at 259–293 (NVYRRTGKECRKCGNLIERKKISGRSTHWCPKCQK) adopts an FPG-type zinc-finger fold. The Proton donor; for delta-elimination activity role is filled by Arg283.

It belongs to the FPG family. In terms of assembly, monomer. Zn(2+) is required as a cofactor.

It catalyses the reaction Hydrolysis of DNA containing ring-opened 7-methylguanine residues, releasing 2,6-diamino-4-hydroxy-5-(N-methyl)formamidopyrimidine.. The enzyme catalyses 2'-deoxyribonucleotide-(2'-deoxyribose 5'-phosphate)-2'-deoxyribonucleotide-DNA = a 3'-end 2'-deoxyribonucleotide-(2,3-dehydro-2,3-deoxyribose 5'-phosphate)-DNA + a 5'-end 5'-phospho-2'-deoxyribonucleoside-DNA + H(+). Involved in base excision repair of DNA damaged by oxidation or by mutagenic agents. Acts as a DNA glycosylase that recognizes and removes damaged bases. Has a preference for oxidized purines, such as 7,8-dihydro-8-oxoguanine (8-oxoG). Has AP (apurinic/apyrimidinic) lyase activity and introduces nicks in the DNA strand. Cleaves the DNA backbone by beta-delta elimination to generate a single-strand break at the site of the removed base with both 3'- and 5'-phosphates. The polypeptide is Formamidopyrimidine-DNA glycosylase (Prochlorococcus marinus (strain MIT 9215)).